Consider the following 156-residue polypeptide: Small ribosomal subunit protein uS7 (156 aa).

The protein belongs to the universal ribosomal protein uS7 family. As to quaternary structure, part of the 30S ribosomal subunit. Contacts proteins S9 and S11.

Its function is as follows. One of the primary rRNA binding proteins, it binds directly to 16S rRNA where it nucleates assembly of the head domain of the 30S subunit. Is located at the subunit interface close to the decoding center, probably blocks exit of the E-site tRNA. The chain is Small ribosomal subunit protein uS7 from Lawsonia intracellularis (strain PHE/MN1-00).